The primary structure comprises 29 residues: Brevinin-2Tc (29 aa).

Cysteine 23 and cysteine 29 are oxidised to a cystine.

It belongs to the frog skin active peptide (FSAP) family. Brevinin subfamily. As to expression, expressed by the skin glands.

Its subcellular location is the secreted. Functionally, antibacterial activity against representative Gram-negative and Gram-positive bacteria. The chain is Brevinin-2Tc from Rana temporaria (European common frog).